Reading from the N-terminus, the 431-residue chain is Nuclear bridge Ish domain protein les1 (431 aa).

The first 21 residues, 1–21, serve as a signal peptide directing secretion; that stretch reads MQPRFLLHGALLALGIQLCLS.

The protein resides in the nucleus inner membrane. In terms of biological role, inner nuclear envelope protein involved in nuclear fission, which is achieved via local disassembly of nuclear pores within the narrow bridge that links segregating daughter nuclei. Les1 restricts the process of local nuclear envelope breakdown to the bridge midzone to prevent the leakage of material from daughter nuclei during mitosis. This Schizosaccharomyces pombe (strain 972 / ATCC 24843) (Fission yeast) protein is Nuclear bridge Ish domain protein les1.